Here is a 423-residue protein sequence, read N- to C-terminus: D-tagatose-1,6-bisphosphate aldolase subunit GatZ (423 aa).

It belongs to the GatZ/KbaZ family. GatZ subfamily. Forms a complex with GatY.

The protein operates within carbohydrate metabolism; D-tagatose 6-phosphate degradation; D-glyceraldehyde 3-phosphate and glycerone phosphate from D-tagatose 6-phosphate: step 2/2. In terms of biological role, component of the tagatose-1,6-bisphosphate aldolase GatYZ that is required for full activity and stability of the Y subunit. Could have a chaperone-like function for the proper and stable folding of GatY. When expressed alone, GatZ does not show any aldolase activity. Is involved in the catabolism of galactitol. The protein is D-tagatose-1,6-bisphosphate aldolase subunit GatZ of Salmonella gallinarum (strain 287/91 / NCTC 13346).